We begin with the raw amino-acid sequence, 153 residues long: UPF0260 protein YcgN (153 aa).

The protein belongs to the UPF0260 family.

In Salmonella paratyphi B (strain ATCC BAA-1250 / SPB7), this protein is UPF0260 protein YcgN.